Here is a 734-residue protein sequence, read N- to C-terminus: MSGFDDPGIFYSDSFGGDNAADEGQARKSQLQRRFKEFLRQYRVGTDRTGFTFKYRDELKRHYNLGEYWIEVEMEDLASFDEELADYLYKQPAEHLQLLEEAAKEVADEVTRPRPAGDEVLQDIQVMLKSDASPSSIRSLKSDTMSHLVKIPGIVIAASGVRAKATRISIQCRSCHSTLTNIAMRPGLDGYALPRKCNTDQAGRPKCPLDPYFIMPDKCKCVDFQTLKLQELPDAVPHGEMPRHMQLYCDRYLCDKVVPGNRVTIMGIYSIKKFGLTSNRGRDRVGVGIRSAYIRVLGIQVDTDGSGRTFAGAMTPQEEEEFRRLAALPNIYELISKSIAPSIFGGTDMKKAIACLLFGGSRKRLPDGLTRRGDINLLMLGDPGTAKSQLLKFVEKCSPIGVYTSGKGSSAAGLTASVMRDPSSRNFIMEGGAMVLADGGVVCIDEFDKMREDDRVAIHEAMEQQTISIAKAGITTTLNSRCSVLAAANSVFGRWDETKGEDNIDFMPTILSRFDMIFIVKDEHNEERDVMLAKHVITLHVSALTQAQAVEGEIDLAKLKKFIAYCRAKCGPRLSAEAAEKLKNRYIIMRSGARQHERDSDRRSSIPITVRQLEAIVRIAEALSKMKLQPFATEADVEEALRLFQVSTLDAALSGTLSGVEGFTSQEDQELLSRIEKQLKRRFAIGSQVSEHSIIQDFTKQKYPEHAIHKVLQLMLRRGEIQHRMQRKVLYRLK.

An N-acetylserine modification is found at serine 2. In terms of domain architecture, MCM spans 331–537 (IYELISKSIA…RDVMLAKHVI (207 aa)). Arginine 371 is an ADP binding site. An N6-acetyllysine mark is found at lysine 392 and lysine 396. Residues 512–515 (SRFD) carry the Arginine finger motif. Serine 605 bears the Phosphoserine mark.

The protein belongs to the MCM family. As to quaternary structure, component of the MCM2-7 complex. The complex forms a toroidal hexameric ring with the proposed subunit order MCM2-MCM6-MCM4-MCM7-MCM3-MCM5. Component of the CMG helicase complex, a hexameric ring of related MCM2-7 subunits stabilized by CDC45 and the tetrameric GINS complex. Interacts with ANKRD17. Interacts with MCMBP. Interacts with TONSL; the interaction is direct.

The protein resides in the nucleus. The protein localises to the chromosome. It localises to the cytoplasm. Its subcellular location is the cytosol. The enzyme catalyses ATP + H2O = ADP + phosphate + H(+). Functionally, acts as a component of the MCM2-7 complex (MCM complex) which is the replicative helicase essential for 'once per cell cycle' DNA replication initiation and elongation in eukaryotic cells. Core component of CDC45-MCM-GINS (CMG) helicase, the molecular machine that unwinds template DNA during replication, and around which the replisome is built. The active ATPase sites in the MCM2-7 ring are formed through the interaction surfaces of two neighboring subunits such that a critical structure of a conserved arginine finger motif is provided in trans relative to the ATP-binding site of the Walker A box of the adjacent subunit. The six ATPase active sites, however, are likely to contribute differentially to the complex helicase activity. This Bos taurus (Bovine) protein is DNA replication licensing factor MCM5.